We begin with the raw amino-acid sequence, 482 residues long: Mannose-1-phosphate guanylyltransferase 2 (482 aa).

This sequence belongs to the mannose-6-phosphate isomerase type 2 family.

It catalyses the reaction alpha-D-mannose 1-phosphate + GTP + H(+) = GDP-alpha-D-mannose + diphosphate. It functions in the pathway nucleotide-sugar biosynthesis; GDP-alpha-D-mannose biosynthesis; GDP-alpha-D-mannose from alpha-D-mannose 1-phosphate (GTP route): step 1/1. In terms of biological role, involved in GDP-mannose biosynthesis which serves as the activated sugar nucleotide precursor for mannose residues in cell surface polysaccharides. This enzyme participates in synthesis of the LPS O antigen. The sequence is that of Mannose-1-phosphate guanylyltransferase 2 (manC2) from Escherichia coli O157:H7.